Reading from the N-terminus, the 670-residue chain is Lebercilin-like protein (670 aa).

A disordered region spans residues 30-51 (KRSPGTGDFSRNSNASNKSVDY). The span at 38-51 (FSRNSNASNKSVDY) shows a compositional bias: polar residues. Coiled-coil stretches lie at residues 148-259 (LHKI…EREE) and 305-336 (AAQT…IKNI). The disordered stretch occupies residues 374-393 (HQGTQKSDVPPLTTKGKKAT). Residues 420 to 440 (EDSKRKYEDLSGEEKHLEVQI) are a coiled coil. 3 disordered regions span residues 495-516 (RSMQ…YTKG), 557-580 (KHLS…SFGK), and 609-670 (LKTD…KIII). Basic and acidic residues-rich tracts occupy residues 560-572 (SNRE…HSDS) and 621-632 (GSEEPLQSKESH). Residues 651–662 (TVVNSIKPSSPT) show a composition bias toward polar residues.

This sequence belongs to the LCA5 family.

The sequence is that of Lebercilin-like protein (LCA5L) from Homo sapiens (Human).